We begin with the raw amino-acid sequence, 382 residues long: Ribosomal RNA large subunit methyltransferase G (382 aa).

The protein belongs to the methyltransferase superfamily. RlmG family.

It is found in the cytoplasm. The catalysed reaction is guanosine(1835) in 23S rRNA + S-adenosyl-L-methionine = N(2)-methylguanosine(1835) in 23S rRNA + S-adenosyl-L-homocysteine + H(+). Its function is as follows. Specifically methylates the guanine in position 1835 (m2G1835) of 23S rRNA. The protein is Ribosomal RNA large subunit methyltransferase G of Aliivibrio salmonicida (strain LFI1238) (Vibrio salmonicida (strain LFI1238)).